The following is a 275-amino-acid chain: Putative phosphoenolpyruvate synthase regulatory protein (275 aa).

Residue 153–160 (GVSRTGKT) participates in ADP binding.

The protein belongs to the pyruvate, phosphate/water dikinase regulatory protein family. PSRP subfamily.

The enzyme catalyses [pyruvate, water dikinase] + ADP = [pyruvate, water dikinase]-phosphate + AMP + H(+). The catalysed reaction is [pyruvate, water dikinase]-phosphate + phosphate + H(+) = [pyruvate, water dikinase] + diphosphate. Functionally, bifunctional serine/threonine kinase and phosphorylase involved in the regulation of the phosphoenolpyruvate synthase (PEPS) by catalyzing its phosphorylation/dephosphorylation. The sequence is that of Putative phosphoenolpyruvate synthase regulatory protein from Nitrosomonas europaea (strain ATCC 19718 / CIP 103999 / KCTC 2705 / NBRC 14298).